The sequence spans 130 residues: Holo-[acyl-carrier-protein] synthase (130 aa).

Residues Asp-8 and Glu-62 each coordinate Mg(2+).

Belongs to the P-Pant transferase superfamily. AcpS family. Mg(2+) is required as a cofactor.

It localises to the cytoplasm. It carries out the reaction apo-[ACP] + CoA = holo-[ACP] + adenosine 3',5'-bisphosphate + H(+). In terms of biological role, transfers the 4'-phosphopantetheine moiety from coenzyme A to a Ser of acyl-carrier-protein. This is Holo-[acyl-carrier-protein] synthase from Acidovorax ebreus (strain TPSY) (Diaphorobacter sp. (strain TPSY)).